We begin with the raw amino-acid sequence, 389 residues long: MLLALAQWLQGDASFLRLFTYLTFRAVMATITALGIGLVCGPWVIRKLTQMKVGQAVRKDGPQTHLVKSGTPTMGGVLILIGIAVATLLWGDLTNRFIWIVMLVTFGFGVIGWVDDYRKVVHKDPRGMSSREKYFWQSVIGLFAAVYLAFSVSEANNVRVFDLFMAWVRSGLSMGLPARADLMLPFLKSISYPLGVWGFIVLTYFVIVGASNAVNLTDGLDGLVIMPVVLVGASLGVFAYVMGSAVYSKYLLFPHIPGAGELLIFCSAMGGAGLAFLWYNTHPAQVFMGDVGALALGGALGTVAVIVRQEIVLFIMGGIFVAETLSVMLQVSWFKYTKKRYGEGRRLLKMAPLHHHFELSGWKETQVVVRFWIITLMLCLFGLTTLKLR.

The next 10 membrane-spanning stretches (helical) occupy residues 25-45 (RAVMATITALGIGLVCGPWVI), 73-93 (TMGGVLILIGIAVATLLWGDL), 97-117 (FIWIVMLVTFGFGVIGWVDDY), 135-155 (FWQSVIGLFAAVYLAFSVSEA), 190-210 (ISYPLGVWGFIVLTYFVIVGA), 222-242 (GLVIMPVVLVGASLGVFAYVM), 258-278 (GAGELLIFCSAMGGAGLAFLW), 286-306 (VFMGDVGALALGGALGTVAVI), 311-331 (IVLFIMGGIFVAETLSVMLQV), and 366-386 (QVVVRFWIITLMLCLFGLTTL).

Belongs to the glycosyltransferase 4 family. MraY subfamily. Requires Mg(2+) as cofactor.

It localises to the cell inner membrane. It catalyses the reaction UDP-N-acetyl-alpha-D-muramoyl-L-alanyl-gamma-D-glutamyl-meso-2,6-diaminopimeloyl-D-alanyl-D-alanine + di-trans,octa-cis-undecaprenyl phosphate = di-trans,octa-cis-undecaprenyl diphospho-N-acetyl-alpha-D-muramoyl-L-alanyl-D-glutamyl-meso-2,6-diaminopimeloyl-D-alanyl-D-alanine + UMP. It participates in cell wall biogenesis; peptidoglycan biosynthesis. Catalyzes the initial step of the lipid cycle reactions in the biosynthesis of the cell wall peptidoglycan: transfers peptidoglycan precursor phospho-MurNAc-pentapeptide from UDP-MurNAc-pentapeptide onto the lipid carrier undecaprenyl phosphate, yielding undecaprenyl-pyrophosphoryl-MurNAc-pentapeptide, known as lipid I. The chain is Phospho-N-acetylmuramoyl-pentapeptide-transferase from Burkholderia cenocepacia (strain HI2424).